Reading from the N-terminus, the 164-residue chain is FMN reductase (NADH) RutF (164 aa).

Belongs to the non-flavoprotein flavin reductase family. RutF subfamily.

The catalysed reaction is FMNH2 + NAD(+) = FMN + NADH + 2 H(+). Catalyzes the reduction of FMN to FMNH2 which is used to reduce pyrimidine by RutA via the Rut pathway. The sequence is that of FMN reductase (NADH) RutF from Klebsiella pneumoniae subsp. pneumoniae (strain ATCC 700721 / MGH 78578).